We begin with the raw amino-acid sequence, 121 residues long: Basic phospholipase A2 BmjeTX-I (121 aa).

7 cysteine pairs are disulfide-bonded: C26–C114, C28–C45, C44–C95, C50–C121, C51–C88, C58–C82, and C76–C86. Ca(2+)-binding residues include Y27, G29, and G31. H48 is an active-site residue. D49 is a Ca(2+) binding site. Residue D89 is part of the active site.

Ca(2+) serves as cofactor. In terms of tissue distribution, expressed by the venom gland.

It localises to the secreted. The catalysed reaction is a 1,2-diacyl-sn-glycero-3-phosphocholine + H2O = a 1-acyl-sn-glycero-3-phosphocholine + a fatty acid + H(+). Its function is as follows. Snake venom phospholipase A2 (PLA2) that induces a slight blockade of neuromuscular contraction in an indirectly stimulated chick biventer cervicis nerve-muscle preparation. Does not inhibit contraction of chick biventer cervicic nerve-muscle preparation in response to treatment with acetylcholine or KCl. The neuromuscular blockade is mediated by inhibitory action at the presynaptic motor nerve endings. Lyses skeletal myoblasts and myotubes in vitro, and intramuscular injection causes local muscle necrosis. Induces edema in the mouse foot pad. Induces a transient increase of IL-6 levels. PLA2 catalyzes the calcium-dependent hydrolysis of the 2-acyl groups in 3-sn-phosphoglycerides. In Bothrops marajoensis (Marajo lancehead), this protein is Basic phospholipase A2 BmjeTX-I.